The sequence spans 715 residues: Ribosomal RNA large subunit methyltransferase K/L (715 aa).

The 112-residue stretch at 43-154 (TQYRALLWSR…RDDLVLSLDL (112 aa)) folds into the THUMP domain.

Belongs to the methyltransferase superfamily. RlmKL family.

Its subcellular location is the cytoplasm. It carries out the reaction guanosine(2445) in 23S rRNA + S-adenosyl-L-methionine = N(2)-methylguanosine(2445) in 23S rRNA + S-adenosyl-L-homocysteine + H(+). The enzyme catalyses guanosine(2069) in 23S rRNA + S-adenosyl-L-methionine = N(2)-methylguanosine(2069) in 23S rRNA + S-adenosyl-L-homocysteine + H(+). Specifically methylates the guanine in position 2445 (m2G2445) and the guanine in position 2069 (m7G2069) of 23S rRNA. The polypeptide is Ribosomal RNA large subunit methyltransferase K/L (Mannheimia succiniciproducens (strain KCTC 0769BP / MBEL55E)).